The sequence spans 1367 residues: DNA-directed RNA polymerase subunit beta' (1367 aa).

The interval 1-34 is disordered; that stretch reads MTSTSPKSRKSSSKRKGSKKKAARSKNVIPPLSK. Residues 7-24 are compositionally biased toward basic residues; the sequence is KSRKSSSKRKGSKKKAAR. Positions 250, 317, 324, and 327 each coordinate Zn(2+). Residues 1306–1367 form a disordered region; it reads SVLDDPSDAD…LQEEGLLSDE (62 aa). Over residues 1355 to 1367 the composition is skewed to low complexity; the sequence is LEGLQEEGLLSDE.

The protein belongs to the RNA polymerase beta' chain family. RpoC2 subfamily. As to quaternary structure, in cyanobacteria the RNAP catalytic core is composed of 2 alpha, 1 beta, 1 beta', 1 gamma and 1 omega subunit. When a sigma factor is associated with the core the holoenzyme is formed, which can initiate transcription. Zn(2+) serves as cofactor.

It catalyses the reaction RNA(n) + a ribonucleoside 5'-triphosphate = RNA(n+1) + diphosphate. Its function is as follows. DNA-dependent RNA polymerase catalyzes the transcription of DNA into RNA using the four ribonucleoside triphosphates as substrates. The protein is DNA-directed RNA polymerase subunit beta' of Prochlorococcus marinus (strain SARG / CCMP1375 / SS120).